The following is a 1058-amino-acid chain: Isoleucine--tRNA ligase (1058 aa).

Positions 48–58 match the 'HIGH' region motif; it reads PYTTGHIHLGT. The 'KMSKS' region signature appears at 596 to 600; that stretch reads KMSKS. Residue Lys599 participates in ATP binding.

This sequence belongs to the class-I aminoacyl-tRNA synthetase family. IleS type 2 subfamily. Monomer. The cofactor is Zn(2+).

Its subcellular location is the cytoplasm. The enzyme catalyses tRNA(Ile) + L-isoleucine + ATP = L-isoleucyl-tRNA(Ile) + AMP + diphosphate. Functionally, catalyzes the attachment of isoleucine to tRNA(Ile). As IleRS can inadvertently accommodate and process structurally similar amino acids such as valine, to avoid such errors it has two additional distinct tRNA(Ile)-dependent editing activities. One activity is designated as 'pretransfer' editing and involves the hydrolysis of activated Val-AMP. The other activity is designated 'posttransfer' editing and involves deacylation of mischarged Val-tRNA(Ile). This chain is Isoleucine--tRNA ligase, found in Methanosarcina mazei (strain ATCC BAA-159 / DSM 3647 / Goe1 / Go1 / JCM 11833 / OCM 88) (Methanosarcina frisia).